A 182-amino-acid chain; its full sequence is Large ribosomal subunit protein uL6 (182 aa).

Belongs to the universal ribosomal protein uL6 family. As to quaternary structure, part of the 50S ribosomal subunit.

Functionally, this protein binds to the 23S rRNA, and is important in its secondary structure. It is located near the subunit interface in the base of the L7/L12 stalk, and near the tRNA binding site of the peptidyltransferase center. The protein is Large ribosomal subunit protein uL6 of Caldicellulosiruptor bescii (strain ATCC BAA-1888 / DSM 6725 / KCTC 15123 / Z-1320) (Anaerocellum thermophilum).